Consider the following 1182-residue polypeptide: Retrotransposable element SLACS 132 kDa protein (1182 aa).

Disordered stretches follow at residues 77–97 (GERS…PRER), 163–220 (DVLD…STDQ), 317–339 (RRKR…ALRL), and 418–478 (RTAR…STAP). Positions 163 to 174 (DVLDEEEQDDDL) are enriched in acidic residues. Over residues 420-446 (ARREQQQQRGKDNQEEEDRQKKEEKSL) the composition is skewed to basic and acidic residues. Residues 456–475 (SVRQGGQPSSSQPKRLNRWS) show a composition bias toward polar residues. Residues 560 to 790 (NADVSMEVGR…TGDTGFGTAV (231 aa)) form the Reverse transcriptase domain.

It catalyses the reaction DNA(n) + a 2'-deoxyribonucleoside 5'-triphosphate = DNA(n+1) + diphosphate. The protein is Retrotransposable element SLACS 132 kDa protein of Trypanosoma brucei gambiense.